A 136-amino-acid polypeptide reads, in one-letter code: DNA-directed RNA polymerase subunit omega (136 aa).

Low complexity predominate over residues 90–102 (SSPAAAAVAPQSS). A disordered region spans residues 90–136 (SSPAAAAVAPQSSSDDKDVQFDRMSEEDLLRGLENLAPPTETDDEGE). Positions 103 to 120 (SDDKDVQFDRMSEEDLLR) are enriched in basic and acidic residues.

The protein belongs to the RNA polymerase subunit omega family. In terms of assembly, the RNAP catalytic core consists of 2 alpha, 1 beta, 1 beta' and 1 omega subunit. When a sigma factor is associated with the core the holoenzyme is formed, which can initiate transcription.

It catalyses the reaction RNA(n) + a ribonucleoside 5'-triphosphate = RNA(n+1) + diphosphate. In terms of biological role, promotes RNA polymerase assembly. Latches the N- and C-terminal regions of the beta' subunit thereby facilitating its interaction with the beta and alpha subunits. The chain is DNA-directed RNA polymerase subunit omega from Methylorubrum populi (strain ATCC BAA-705 / NCIMB 13946 / BJ001) (Methylobacterium populi).